The sequence spans 295 residues: Glutamyl-Q tRNA(Asp) synthetase (295 aa).

L-glutamate is bound by residues 5–9 (RFAPS) and glutamate 41. Residues 8–18 (PSPTGLLHIGS) carry the 'HIGH' region motif. Cysteine 97, cysteine 99, tyrosine 117, and cysteine 121 together coordinate Zn(2+). The L-glutamate site is built by tyrosine 178 and arginine 196. Residues 234–238 (KWSKQ) carry the 'KMSKS' region motif. Lysine 237 is an ATP binding site.

Belongs to the class-I aminoacyl-tRNA synthetase family. GluQ subfamily. It depends on Zn(2+) as a cofactor.

Catalyzes the tRNA-independent activation of glutamate in presence of ATP and the subsequent transfer of glutamate onto a tRNA(Asp). Glutamate is transferred on the 2-amino-5-(4,5-dihydroxy-2-cyclopenten-1-yl) moiety of the queuosine in the wobble position of the QUC anticodon. The chain is Glutamyl-Q tRNA(Asp) synthetase from Neisseria meningitidis serogroup A / serotype 4A (strain DSM 15465 / Z2491).